The chain runs to 468 residues: MMTSPLTQRGALSLLLLLMPAVTPTWYAGSGYSPDESYNEVYAEEVPAARARALDYRVPRWCYTLNIQDGEATCYSPRGGNYHSSLGTRCELSCDRGFRLIGRKSVQCLPSRRWSGTAYCRQIRCHTLPFITSGTYTCTNGMLLDSRCDYSCSSGYHLEGDRSRICMEDGRWSGGEPVCVDIDPPKIRCPHSREKMAEPEKLTARVYWDPPLVKDSADGTITRVTLRGPEPGSHFPEGEHVIRYTAYDRAYNRASCKFIVKVQVRRCPILKPPQHGYLTCSSAGDNYGAICEYHCDGGYERQGTPSRVCQSSRQWSGTPPVCTPMKINVNVNSAAGLLDQFYEKQRLLIVSAPDPSNRYYKMQISMLQQSTCGLDLRHVTIIELVGQPPQEVGRIREQQLSAGIIEELRQFQRLTRSYFNMVLIDKQGIDRERYMEPVTPEEIFTFIDDYLLSNEELARRVEQRDLCE.

Residues 1–25 (MMTSPLTQRGALSLLLLLMPAVTPT) form the signal peptide. Sushi domains follow at residues 72 to 122 (ATCY…YCRQ), 123 to 181 (IRCH…VCVD), and 265 to 324 (RRCP…VCTP). 4 disulfides stabilise this stretch: Cys74/Cys108, Cys94/Cys120, Cys125/Cys166, and Cys152/Cys179. One can recognise an HYR domain in the interval 180 to 264 (VDIDPPKIRC…SCKFIVKVQV (85 aa)). 2 disulfides stabilise this stretch: Cys267/Cys309 and Cys295/Cys322.

Forms homooligomers. Interacts with PLAUR (via the UPAR/Ly6 domains), ADAMTS4 and CTSB. Interacts with HGF; the interaction increases the mitogenic activity of HGF. Post-translationally, contains chondroitin sulfate chains. As to expression, expressed in angiogenic endothelial cells (at protein level).

The protein localises to the secreted. It is found in the cytoplasm. It localises to the cell surface. Its subcellular location is the synapse. In terms of biological role, acts as a ligand for the urokinase plasminogen activator surface receptor. Plays a role in angiogenesis by inducing endothelial cell migration and the formation of vascular network (cords). Involved in cellular migration and adhesion. Increases the phosphorylation levels of FAK. Interacts with and increases the mitogenic activity of HGF. Promotes synapse formation. Required for ultrasonic vocalizations. This is Sushi repeat-containing protein SRPX2 (Srpx2) from Mus musculus (Mouse).